Reading from the N-terminus, the 308-residue chain is Ornithine carbamoyltransferase (308 aa).

Carbamoyl phosphate contacts are provided by residues 50–53 (STRT), Q77, R101, and 128–131 (HPCQ). Residues N160, D224, and 228-229 (SM) contribute to the L-ornithine site. Carbamoyl phosphate contacts are provided by residues 264–265 (CL) and R292.

It belongs to the aspartate/ornithine carbamoyltransferase superfamily. OTCase family.

Its subcellular location is the cytoplasm. It carries out the reaction carbamoyl phosphate + L-ornithine = L-citrulline + phosphate + H(+). The protein operates within amino-acid biosynthesis; L-arginine biosynthesis; L-arginine from L-ornithine and carbamoyl phosphate: step 1/3. Functionally, reversibly catalyzes the transfer of the carbamoyl group from carbamoyl phosphate (CP) to the N(epsilon) atom of ornithine (ORN) to produce L-citrulline. This chain is Ornithine carbamoyltransferase, found in Mycobacterium ulcerans (strain Agy99).